Consider the following 124-residue polypeptide: Insulin growth factor-like family member 4 (124 aa).

The signal sequence occupies residues 1 to 19; sequence MVPRISAAIFIFELLGSNS. 2 N-linked (GlcNAc...) asparagine glycosylation sites follow: asparagine 57 and asparagine 84.

Belongs to the IGFL family. Detected in the cerebellum.

The protein localises to the secreted. The polypeptide is Insulin growth factor-like family member 4 (IGFL4) (Homo sapiens (Human)).